The sequence spans 105 residues: Thioredoxin (105 aa).

The Thioredoxin domain maps to 2–105 (VKSVGNLADF…KLEETIKSLV (104 aa)). Catalysis depends on nucleophile residues Cys-32 and Cys-35. Cys-32 and Cys-35 are joined by a disulfide. S-nitrosocysteine occurs at positions 69 and 73.

This sequence belongs to the thioredoxin family. Post-translationally, may be nitrosylated on several cysteine residues, depending on the oxidation state. Nitrosylated Cys-73 may serve as donor for nitrosylation of target proteins.

It is found in the nucleus. The protein localises to the cytoplasm. It localises to the secreted. Functionally, participates in various redox reactions through the reversible oxidation of its active center dithiol to a disulfide and catalyzes dithiol-disulfide exchange reactions. Plays a role in the reversible S-nitrosylation of cysteine residues in target proteins, and thereby contributes to the response to intracellular nitric oxide. Nitrosylates the active site Cys of CASP3 in response to nitric oxide (NO), and thereby inhibits caspase-3 activity. Induces the FOS/JUN AP-1 DNA binding activity in ionizing radiation (IR) cells through its oxidation/reduction status and stimulates AP-1 transcriptional activity. This chain is Thioredoxin (TXN), found in Gallus gallus (Chicken).